Reading from the N-terminus, the 90-residue chain is MTRTVMCRKYKEQLEGLERPPYPGAKGQDIFEHVSAKAWADWQKHQTLLINEKRLNMMNAEDRKFLQGEMDKYFSGEEYAQAEGYVPPAE.

This sequence belongs to the Fe(2+)-trafficking protein family.

Its function is as follows. Could be a mediator in iron transactions between iron acquisition and iron-requiring processes, such as synthesis and/or repair of Fe-S clusters in biosynthetic enzymes. This Pseudomonas fluorescens (strain Pf0-1) protein is Probable Fe(2+)-trafficking protein.